We begin with the raw amino-acid sequence, 268 residues long: Undecaprenyl-diphosphatase (268 aa).

Transmembrane regions (helical) follow at residues 3-23 (FFNL…EFIP), 46-66 (FEVL…SAKL), 84-104 (LGVL…HGFI), 107-127 (VLFE…FILL), 144-164 (YPLP…IPGV), 185-205 (AEFS…YDLF), 213-233 (FNDG…GVFV), and 246-266 (FALF…ALII).

This sequence belongs to the UppP family.

The protein localises to the cell inner membrane. The catalysed reaction is di-trans,octa-cis-undecaprenyl diphosphate + H2O = di-trans,octa-cis-undecaprenyl phosphate + phosphate + H(+). Its function is as follows. Catalyzes the dephosphorylation of undecaprenyl diphosphate (UPP). Confers resistance to bacitracin. The sequence is that of Undecaprenyl-diphosphatase from Brucella abortus (strain S19).